Reading from the N-terminus, the 237-residue chain is uncharacterized protein (237 aa).

The segment at 213–237 (GQGKYLKLDSNTTENKTTKQNETGG) is disordered. Over residues 223 to 237 (NTTENKTTKQNETGG) the composition is skewed to low complexity.

This is an uncharacterized protein from Methanothermobacter thermautotrophicus (Methanobacterium thermoformicicum).